The chain runs to 647 residues: Nucleoside triphosphatase I (647 aa).

In terms of domain architecture, Helicase ATP-binding spans 48 to 212; it reads FIGLKNLNSM…NNLIGLLRPN (165 aa). 61-68 serves as a coordination point for ATP; the sequence is WDTGTGKT. The short motif at 150 to 153 is the DEXH box element; that stretch reads DEVH. Residues 378–541 form the Helicase C-terminal domain; it reads YIEACRIILN…KINVVFDLLK (164 aa). A binding to the cap-specific mRNA (nucleoside-2'-O-)-methyltransferase region spans residues 467–533; sequence DIIILDMPWN…DIIKNKQGKI (67 aa).

It belongs to the helicase family. NPH I subfamily. As to quaternary structure, monomer. Interacts (via C-terminus) with RAP94 (via N-terminus). Interacts with the cap-specific mRNA (nucleoside-2'-O-)-methyltransferase.

Its subcellular location is the virion. It catalyses the reaction a ribonucleoside 5'-triphosphate + H2O = a ribonucleoside 5'-diphosphate + phosphate + H(+). Functionally, DNA-dependent ATPase required for providing the needed energy to achieve the termination of early transcripts. Acts in concert with the RAP94 subunit of the virion RNA polymerase and the capping enzyme/VTF to catalyze release of UUUUUNU-containing nascent RNA from the elongation complex. NPH-I must bind ssDNA in order to exhibit ATPase activity. This chain is Nucleoside triphosphatase I (NPH1), found in Choristoneura fumiferana (Spruce budworm moth).